A 103-amino-acid chain; its full sequence is MQNQRIRIRLKAFDYRLIDQSTLEIVNTAKRTGAKVLGPIPLPTRKERFTILVSPHVNKDARDQYEIRTHKRLIDIVQPTEKTVDALMRLDLAAGVDVQISLG.

Belongs to the universal ribosomal protein uS10 family. As to quaternary structure, part of the 30S ribosomal subunit.

Its function is as follows. Involved in the binding of tRNA to the ribosomes. The polypeptide is Small ribosomal subunit protein uS10 (Buchnera aphidicola subsp. Cinara cedri (strain Cc)).